The following is a 130-amino-acid chain: Small ribosomal subunit protein uS8 (130 aa).

This sequence belongs to the universal ribosomal protein uS8 family. Part of the 30S ribosomal subunit.

In terms of biological role, one of the primary rRNA binding proteins, it binds directly to 16S rRNA central domain where it helps coordinate assembly of the platform of the 30S subunit. The protein is Small ribosomal subunit protein uS8 of Haloquadratum walsbyi (strain DSM 16790 / HBSQ001).